Consider the following 78-residue polypeptide: Small ribosomal subunit protein bS20 (78 aa).

It belongs to the bacterial ribosomal protein bS20 family.

Its function is as follows. Binds directly to 16S ribosomal RNA. The chain is Small ribosomal subunit protein bS20 from Streptococcus pneumoniae serotype 2 (strain D39 / NCTC 7466).